The sequence spans 146 residues: Anti-sigma F factor (146 aa).

It belongs to the anti-sigma-factor family.

It carries out the reaction L-seryl-[protein] + ATP = O-phospho-L-seryl-[protein] + ADP + H(+). The catalysed reaction is L-threonyl-[protein] + ATP = O-phospho-L-threonyl-[protein] + ADP + H(+). Its function is as follows. Binds to sigma F and blocks its ability to form an RNA polymerase holoenzyme (E-sigma F). Phosphorylates SpoIIAA on a serine residue. This phosphorylation may enable SpoIIAA to act as an anti-anti-sigma factor that counteracts SpoIIAB and thus releases sigma F from inhibition. The sequence is that of Anti-sigma F factor from Geobacillus thermodenitrificans (strain NG80-2).